Reading from the N-terminus, the 283-residue chain is Phosphatidylglycerol--prolipoprotein diacylglyceryl transferase (283 aa).

A run of 4 helical transmembrane segments spans residues 17–37 (LAVR…TFLG), 56–76 (FLTW…VLFY), 92–112 (WEGG…IWLF), and 117–137 (GIGF…GLAS). Arg-139 provides a ligand contact to a 1,2-diacyl-sn-glycero-3-phospho-(1'-sn-glycerol). 3 helical membrane passes run 194 to 214 (PSQL…VWLF), 222 to 242 (GQVA…AEFA), and 255 to 275 (GLSM…VGFV).

It belongs to the Lgt family.

Its subcellular location is the cell inner membrane. It catalyses the reaction L-cysteinyl-[prolipoprotein] + a 1,2-diacyl-sn-glycero-3-phospho-(1'-sn-glycerol) = an S-1,2-diacyl-sn-glyceryl-L-cysteinyl-[prolipoprotein] + sn-glycerol 1-phosphate + H(+). Its pathway is protein modification; lipoprotein biosynthesis (diacylglyceryl transfer). Functionally, catalyzes the transfer of the diacylglyceryl group from phosphatidylglycerol to the sulfhydryl group of the N-terminal cysteine of a prolipoprotein, the first step in the formation of mature lipoproteins. In Neisseria meningitidis serogroup C / serotype 2a (strain ATCC 700532 / DSM 15464 / FAM18), this protein is Phosphatidylglycerol--prolipoprotein diacylglyceryl transferase.